Consider the following 374-residue polypeptide: MATLCRPSVSVPEHVITMEETLELARRRHTDHPQLPLALRLIENTGVRTRHIVQPIEDTLEHPGFEDRNKVYEREAKSRVPAVIQRALDDAELLATDIDVIIYVSCTGFMMPSLTAWLINEMGFDSTTRQIPIAQLGCAAGGAAINRAHDFCTAYPEANALIVACEFCSLCYQPTDLGVGSLLCNGLFGDGIAAAVVRGRGGTGVRLERNGSYLIPKTEDWIMYDVKATGFHFLLDKRVPATMEPLAPALKELAGEHGWDASDLDFYIVHAGGPRILDDLSTFLEVDPHAFRFSRATLTEYGNIASAVVLDALRRLFDEGGVEEGARGLLAGFGPGITAEMSLGCWQTADVRRGIRQDVTRTAARGVSRRVRQA.

Cys-138 is an active-site residue.

Belongs to the thiolase-like superfamily. Chalcone/stilbene synthases family. As to quaternary structure, homodimer.

The enzyme catalyses 5 malonyl-CoA + 5 H(+) = naphthalene-1,3,6,8-tetrol + 5 CO2 + 5 CoA + H2O. It functions in the pathway pigment biosynthesis; melanin biosynthesis. In terms of biological role, involved in the biosynthesis of melanin but also various secondary metabolites containing a naphthoquinone ring. Catalyzes the iterative condensation of five CoA-linked malonyl units to form a pentaketide intermediate. THNS subsequently catalyzes the dual intramolecular Claisen and aldol condensations of this linear intermediate to produce the fused ring of 1,3,6,8-tetrahydroxynaphthalene (THN). The protein is 1,3,6,8-tetrahydroxynaphthalene synthase of Streptomyces coelicolor (strain ATCC BAA-471 / A3(2) / M145).